The sequence spans 232 residues: Phosphatidylserine decarboxylase proenzyme (232 aa).

Residue S190 is the Schiff-base intermediate with substrate; via pyruvic acid of the active site. S190 carries the pyruvic acid (Ser); by autocatalysis modification.

The protein belongs to the phosphatidylserine decarboxylase family. PSD-A subfamily. As to quaternary structure, heterodimer of a large membrane-associated beta subunit and a small pyruvoyl-containing alpha subunit. Requires pyruvate as cofactor. Is synthesized initially as an inactive proenzyme. Formation of the active enzyme involves a self-maturation process in which the active site pyruvoyl group is generated from an internal serine residue via an autocatalytic post-translational modification. Two non-identical subunits are generated from the proenzyme in this reaction, and the pyruvate is formed at the N-terminus of the alpha chain, which is derived from the carboxyl end of the proenzyme. The post-translation cleavage follows an unusual pathway, termed non-hydrolytic serinolysis, in which the side chain hydroxyl group of the serine supplies its oxygen atom to form the C-terminus of the beta chain, while the remainder of the serine residue undergoes an oxidative deamination to produce ammonia and the pyruvoyl prosthetic group on the alpha chain.

It is found in the cell membrane. It catalyses the reaction a 1,2-diacyl-sn-glycero-3-phospho-L-serine + H(+) = a 1,2-diacyl-sn-glycero-3-phosphoethanolamine + CO2. Its pathway is phospholipid metabolism; phosphatidylethanolamine biosynthesis; phosphatidylethanolamine from CDP-diacylglycerol: step 2/2. Functionally, catalyzes the formation of phosphatidylethanolamine (PtdEtn) from phosphatidylserine (PtdSer). The polypeptide is Phosphatidylserine decarboxylase proenzyme (Rhizobium johnstonii (strain DSM 114642 / LMG 32736 / 3841) (Rhizobium leguminosarum bv. viciae)).